The chain runs to 201 residues: Lipoprotein signal peptidase (201 aa).

2 helical membrane passes run 73–93 (SNAI…YLMI) and 97–117 (TIGS…NLID). Catalysis depends on residues Asp126 and Asp144. Residues 135-155 (YSFPVFNLADCFITIGVIILI) traverse the membrane as a helical segment.

This sequence belongs to the peptidase A8 family.

The protein localises to the cell inner membrane. The enzyme catalyses Release of signal peptides from bacterial membrane prolipoproteins. Hydrolyzes -Xaa-Yaa-Zaa-|-(S,diacylglyceryl)Cys-, in which Xaa is hydrophobic (preferably Leu), and Yaa (Ala or Ser) and Zaa (Gly or Ala) have small, neutral side chains.. It functions in the pathway protein modification; lipoprotein biosynthesis (signal peptide cleavage). Functionally, this protein specifically catalyzes the removal of signal peptides from prolipoproteins. The chain is Lipoprotein signal peptidase from Rickettsia africae (strain ESF-5).